Consider the following 440-residue polypeptide: Dihydrolipoyllysine-residue acetyltransferase component of pyruvate dehydrogenase complex (440 aa).

Residues 2-78 (SIEVKMPALS…AVGQVIAVMA (77 aa)) form the Lipoyl-binding domain. Lys-43 is subject to N6-lipoyllysine. Residues 91 to 113 (ASSQISEPSEKADVAQKETADSE) are disordered. The segment covering 98–110 (PSEKADVAQKETA) has biased composition (basic and acidic residues). Positions 149–186 (KASPLAKRLAKKNHVDLKQVNGSGPHGRIIKADIEAFI) constitute a Peripheral subunit-binding (PSBD) domain. Over residues 192 to 202 (ASSNPSVSTPE) the composition is skewed to polar residues. The segment at 192–214 (ASSNPSVSTPEASGKITHDTPHN) is disordered. His-412 is an active-site residue.

The protein belongs to the 2-oxoacid dehydrogenase family. As to quaternary structure, forms a 24-polypeptide structural core with octahedral symmetry. (R)-lipoate serves as cofactor.

It carries out the reaction N(6)-[(R)-dihydrolipoyl]-L-lysyl-[protein] + acetyl-CoA = N(6)-[(R)-S(8)-acetyldihydrolipoyl]-L-lysyl-[protein] + CoA. Its function is as follows. The pyruvate dehydrogenase complex catalyzes the overall conversion of pyruvate to acetyl-CoA and CO(2). It contains multiple copies of three enzymatic components: pyruvate dehydrogenase (E1), dihydrolipoamide acetyltransferase (E2) and lipoamide dehydrogenase (E3). The protein is Dihydrolipoyllysine-residue acetyltransferase component of pyruvate dehydrogenase complex (pdhC) of Zymomonas mobilis subsp. mobilis (strain ATCC 31821 / ZM4 / CP4).